Consider the following 380-residue polypeptide: Variant-surface-glycoprotein phospholipase C (380 aa).

Positions 31–205 (ITQVCFVGSH…SRRRIFLVVG (175 aa)) constitute a PI-PLC X-box domain.

In terms of assembly, monomer.

Its subcellular location is the membrane. It catalyses the reaction a 6-(alpha-D-glucosaminyl)-1-(1,2-diacyl-sn-glycero-3-phospho)-1D-myo-inositol = 6-(alpha-D-glucosaminyl)-1D-myo-inositol 1,2-cyclic phosphate + a 1,2-diacyl-sn-glycerol. In terms of biological role, by hydrolysis of the attached glycolipid, releases soluble variant surface glycoprotein containing phosphoinositol from the cell wall of T.brucei after cell lysis. It also cleaves similar membrane anchors on some mammalian proteins. VSG lipase may play a role in processes such as parasite differentiation or antigenic variation. The polypeptide is Variant-surface-glycoprotein phospholipase C (Trypanosoma cruzi).